Consider the following 427-residue polypeptide: Enolase (427 aa).

Residue Gln163 coordinates (2R)-2-phosphoglycerate. The Proton donor role is filled by Glu205. The Mg(2+) site is built by Asp242, Glu285, and Asp312. (2R)-2-phosphoglycerate is bound by residues Lys337, Arg366, Ser367, and Lys388. The active-site Proton acceptor is the Lys337.

Belongs to the enolase family. Requires Mg(2+) as cofactor.

It is found in the cytoplasm. The protein localises to the secreted. It localises to the cell surface. The catalysed reaction is (2R)-2-phosphoglycerate = phosphoenolpyruvate + H2O. It functions in the pathway carbohydrate degradation; glycolysis; pyruvate from D-glyceraldehyde 3-phosphate: step 4/5. Functionally, catalyzes the reversible conversion of 2-phosphoglycerate (2-PG) into phosphoenolpyruvate (PEP). It is essential for the degradation of carbohydrates via glycolysis. The sequence is that of Enolase from Nitrobacter hamburgensis (strain DSM 10229 / NCIMB 13809 / X14).